Reading from the N-terminus, the 319-residue chain is 4-hydroxy-3-methylbut-2-enyl diphosphate reductase (319 aa).

C17 lines the [4Fe-4S] cluster pocket. H46 and H79 together coordinate (2E)-4-hydroxy-3-methylbut-2-enyl diphosphate. H46 and H79 together coordinate dimethylallyl diphosphate. H46 and H79 together coordinate isopentenyl diphosphate. [4Fe-4S] cluster is bound at residue C101. H129 is a (2E)-4-hydroxy-3-methylbut-2-enyl diphosphate binding site. Dimethylallyl diphosphate is bound at residue H129. An isopentenyl diphosphate-binding site is contributed by H129. The active-site Proton donor is the E131. T170 contributes to the (2E)-4-hydroxy-3-methylbut-2-enyl diphosphate binding site. C200 is a binding site for [4Fe-4S] cluster. 4 residues coordinate (2E)-4-hydroxy-3-methylbut-2-enyl diphosphate: S228, S229, N230, and S273. Dimethylallyl diphosphate is bound by residues S228, S229, N230, and S273. Residues S228, S229, N230, and S273 each contribute to the isopentenyl diphosphate site.

It belongs to the IspH family. Requires [4Fe-4S] cluster as cofactor.

The enzyme catalyses isopentenyl diphosphate + 2 oxidized [2Fe-2S]-[ferredoxin] + H2O = (2E)-4-hydroxy-3-methylbut-2-enyl diphosphate + 2 reduced [2Fe-2S]-[ferredoxin] + 2 H(+). The catalysed reaction is dimethylallyl diphosphate + 2 oxidized [2Fe-2S]-[ferredoxin] + H2O = (2E)-4-hydroxy-3-methylbut-2-enyl diphosphate + 2 reduced [2Fe-2S]-[ferredoxin] + 2 H(+). Its pathway is isoprenoid biosynthesis; dimethylallyl diphosphate biosynthesis; dimethylallyl diphosphate from (2E)-4-hydroxy-3-methylbutenyl diphosphate: step 1/1. It participates in isoprenoid biosynthesis; isopentenyl diphosphate biosynthesis via DXP pathway; isopentenyl diphosphate from 1-deoxy-D-xylulose 5-phosphate: step 6/6. In terms of biological role, catalyzes the conversion of 1-hydroxy-2-methyl-2-(E)-butenyl 4-diphosphate (HMBPP) into a mixture of isopentenyl diphosphate (IPP) and dimethylallyl diphosphate (DMAPP). Acts in the terminal step of the DOXP/MEP pathway for isoprenoid precursor biosynthesis. The protein is 4-hydroxy-3-methylbut-2-enyl diphosphate reductase of Cereibacter sphaeroides (strain ATCC 17029 / ATH 2.4.9) (Rhodobacter sphaeroides).